The following is a 371-amino-acid chain: Alanine racemase (371 aa).

Lysine 39 functions as the Proton acceptor; specific for D-alanine in the catalytic mechanism. N6-(pyridoxal phosphate)lysine is present on lysine 39. Residue arginine 137 participates in substrate binding. The active-site Proton acceptor; specific for L-alanine is tyrosine 266. Residue methionine 314 participates in substrate binding.

It belongs to the alanine racemase family. Pyridoxal 5'-phosphate serves as cofactor.

The catalysed reaction is L-alanine = D-alanine. The protein operates within amino-acid biosynthesis; D-alanine biosynthesis; D-alanine from L-alanine: step 1/1. In terms of biological role, catalyzes the interconversion of L-alanine and D-alanine. May also act on other amino acids. The protein is Alanine racemase (alr) of Desulfovibrio desulfuricans (strain ATCC 27774 / DSM 6949 / MB).